Reading from the N-terminus, the 44-residue chain is Cytochrome b559 subunit beta (44 aa).

Residues 19–35 (WLAVHTLAVPTVFFVGA) traverse the membrane as a helical segment. A heme-binding site is contributed by His-23.

Belongs to the PsbE/PsbF family. In terms of assembly, heterodimer of an alpha subunit and a beta subunit. PSII is composed of 1 copy each of membrane proteins PsbA, PsbB, PsbC, PsbD, PsbE, PsbF, PsbH, PsbI, PsbJ, PsbK, PsbL, PsbM, PsbT, PsbX, PsbY, PsbZ, Psb30/Ycf12, peripheral proteins PsbO, CyanoQ (PsbQ), PsbU, PsbV and a large number of cofactors. It forms dimeric complexes. Requires heme b as cofactor.

It localises to the cellular thylakoid membrane. In terms of biological role, this b-type cytochrome is tightly associated with the reaction center of photosystem II (PSII). PSII is a light-driven water:plastoquinone oxidoreductase that uses light energy to abstract electrons from H(2)O, generating O(2) and a proton gradient subsequently used for ATP formation. It consists of a core antenna complex that captures photons, and an electron transfer chain that converts photonic excitation into a charge separation. This is Cytochrome b559 subunit beta from Crocosphaera subtropica (strain ATCC 51142 / BH68) (Cyanothece sp. (strain ATCC 51142)).